The chain runs to 69 residues: Toxin Lc a (69 aa).

Cystine bridges form between Cys3-Cys20, Cys13-Cys41, Cys45-Cys56, and Cys57-Cys62.

Belongs to the three-finger toxin family. Long-chain subfamily. Type II alpha-neurotoxin sub-subfamily. In terms of tissue distribution, expressed by the venom gland.

The protein localises to the secreted. Binds with high affinity to muscular nicotinic acetylcholine receptors (nAChRs), whereas it binds with a low affinity to neuronal alpha-7/CHRNA7 nAChRs. The protein is Toxin Lc a of Laticauda colubrina (Yellow-lipped sea krait).